We begin with the raw amino-acid sequence, 499 residues long: Glycerol kinase (499 aa).

T13 provides a ligand contact to ADP. Residues T13, T14, and S15 each coordinate ATP. Sn-glycerol 3-phosphate is bound at residue T13. R17 serves as a coordination point for ADP. The sn-glycerol 3-phosphate site is built by R83, E84, Y135, and D245. Glycerol contacts are provided by R83, E84, Y135, D245, and Q246. ADP is bound by residues T267 and G310. Residues T267, G310, Q314, and G411 each contribute to the ATP site. ADP-binding residues include G411 and N415.

The protein belongs to the FGGY kinase family.

The enzyme catalyses glycerol + ATP = sn-glycerol 3-phosphate + ADP + H(+). It participates in polyol metabolism; glycerol degradation via glycerol kinase pathway; sn-glycerol 3-phosphate from glycerol: step 1/1. Its activity is regulated as follows. Inhibited by fructose 1,6-bisphosphate (FBP). In terms of biological role, key enzyme in the regulation of glycerol uptake and metabolism. Catalyzes the phosphorylation of glycerol to yield sn-glycerol 3-phosphate. This Xanthomonas euvesicatoria pv. vesicatoria (strain 85-10) (Xanthomonas campestris pv. vesicatoria) protein is Glycerol kinase.